We begin with the raw amino-acid sequence, 157 residues long: Protein Smg homolog (157 aa).

This sequence belongs to the Smg family.

This chain is Protein Smg homolog, found in Aliivibrio salmonicida (strain LFI1238) (Vibrio salmonicida (strain LFI1238)).